The chain runs to 76 residues: MKNSSILFVLIIVVFLISSSGNKKMVGEAKKCDQTWTCEGEDKCREKCLTLHNGVGVCDLYTAPLVPKQCFCHYDC.

The signal sequence occupies residues 1-21; sequence MKNSSILFVLIIVVFLISSSG. 4 cysteine pairs are disulfide-bonded: Cys-32-Cys-76, Cys-38-Cys-58, Cys-44-Cys-70, and Cys-48-Cys-72.

This sequence belongs to the DEFL family.

The protein localises to the secreted. The sequence is that of Putative defensin-like protein 184 (LCR18) from Arabidopsis thaliana (Mouse-ear cress).